Reading from the N-terminus, the 642-residue chain is Threonine--tRNA ligase (642 aa).

In terms of domain architecture, TGS spans 1 to 61; the sequence is MPIITLPDGS…EADASLAIIT (61 aa). Residues 243-534 are catalytic; it reads DHRKIGKQLD…LTEEYAGLFP (292 aa). The Zn(2+) site is built by C334, H385, and H511.

It belongs to the class-II aminoacyl-tRNA synthetase family. As to quaternary structure, homodimer. Zn(2+) serves as cofactor.

It is found in the cytoplasm. The enzyme catalyses tRNA(Thr) + L-threonine + ATP = L-threonyl-tRNA(Thr) + AMP + diphosphate + H(+). Functionally, catalyzes the attachment of threonine to tRNA(Thr) in a two-step reaction: L-threonine is first activated by ATP to form Thr-AMP and then transferred to the acceptor end of tRNA(Thr). Also edits incorrectly charged L-seryl-tRNA(Thr). The chain is Threonine--tRNA ligase from Aeromonas hydrophila subsp. hydrophila (strain ATCC 7966 / DSM 30187 / BCRC 13018 / CCUG 14551 / JCM 1027 / KCTC 2358 / NCIMB 9240 / NCTC 8049).